The primary structure comprises 375 residues: tRNA-specific 2-thiouridylase MnmA (375 aa).

ATP contacts are provided by residues 8 to 15 (GLSGGVDS) and M34. Positions 104–106 (NPD) are interaction with target base in tRNA. Catalysis depends on C109, which acts as the Nucleophile. Residues C109 and C208 are joined by a disulfide bond. G134 serves as a coordination point for ATP. Positions 158–160 (KDQ) are interaction with tRNA. C208 functions as the Cysteine persulfide intermediate in the catalytic mechanism. Positions 321 to 322 (RY) are interaction with tRNA.

This sequence belongs to the MnmA/TRMU family.

It localises to the cytoplasm. The enzyme catalyses S-sulfanyl-L-cysteinyl-[protein] + uridine(34) in tRNA + AH2 + ATP = 2-thiouridine(34) in tRNA + L-cysteinyl-[protein] + A + AMP + diphosphate + H(+). Catalyzes the 2-thiolation of uridine at the wobble position (U34) of tRNA, leading to the formation of s(2)U34. The sequence is that of tRNA-specific 2-thiouridylase MnmA from Mycoplasma capricolum subsp. capricolum (strain California kid / ATCC 27343 / NCTC 10154).